We begin with the raw amino-acid sequence, 361 residues long: Mannose-1-phosphate guanyltransferase (361 aa).

The protein belongs to the transferase hexapeptide repeat family.

It is found in the cytoplasm. It catalyses the reaction alpha-D-mannose 1-phosphate + GTP + H(+) = GDP-alpha-D-mannose + diphosphate. The protein operates within nucleotide-sugar biosynthesis; GDP-alpha-D-mannose biosynthesis; GDP-alpha-D-mannose from alpha-D-mannose 1-phosphate (GTP route): step 1/1. Its function is as follows. Involved in cell wall synthesis where it is required for glycosylation. Involved in cell cycle progression through cell-size checkpoint. This is Mannose-1-phosphate guanyltransferase (MPG1) from Eremothecium gossypii (strain ATCC 10895 / CBS 109.51 / FGSC 9923 / NRRL Y-1056) (Yeast).